We begin with the raw amino-acid sequence, 409 residues long: Divalent metal cation transporter MntH (409 aa).

Helical transmembrane passes span 19–39 (LSLM…GNFA), 46–66 (ATFG…AMLV), 98–118 (WVQA…GAAI), 122–142 (LLFG…TFLI), 155–175 (LVIG…LIFS), 196–216 (AVFL…IYLH), 241–261 (IAMT…AAAF), 290–310 (VFGL…TLAG), 320–340 (FYIP…IVIL), 348–368 (ILVM…VPLL), and 388–408 (ILGK…LISL).

The protein belongs to the NRAMP family.

Its subcellular location is the cell inner membrane. Its function is as follows. H(+)-stimulated, divalent metal cation uptake system. The chain is Divalent metal cation transporter MntH from Yersinia pseudotuberculosis serotype O:1b (strain IP 31758).